Here is a 340-residue protein sequence, read N- to C-terminus: Holliday junction branch migration complex subunit RuvB (340 aa).

Residues 1 to 182 (MSDIDPTVRA…FGIPTRLQFY (182 aa)) are large ATPase domain (RuvB-L). Residues L21, R22, G63, K66, T67, T68, 129–131 (EDF), R172, Y182, and R219 each bind ATP. T67 provides a ligand contact to Mg(2+). Positions 183–253 (TEDELFIIVD…LADMALNRLG (71 aa)) are small ATPAse domain (RuvB-S). The interval 256-340 (HLGLDGADRR…PRAQTDLFEG (85 aa)) is head domain (RuvB-H). DNA contacts are provided by R292, R311, and R316.

This sequence belongs to the RuvB family. As to quaternary structure, homohexamer. Forms an RuvA(8)-RuvB(12)-Holliday junction (HJ) complex. HJ DNA is sandwiched between 2 RuvA tetramers; dsDNA enters through RuvA and exits via RuvB. An RuvB hexamer assembles on each DNA strand where it exits the tetramer. Each RuvB hexamer is contacted by two RuvA subunits (via domain III) on 2 adjacent RuvB subunits; this complex drives branch migration. In the full resolvosome a probable DNA-RuvA(4)-RuvB(12)-RuvC(2) complex forms which resolves the HJ.

Its subcellular location is the cytoplasm. The enzyme catalyses ATP + H2O = ADP + phosphate + H(+). The RuvA-RuvB-RuvC complex processes Holliday junction (HJ) DNA during genetic recombination and DNA repair, while the RuvA-RuvB complex plays an important role in the rescue of blocked DNA replication forks via replication fork reversal (RFR). RuvA specifically binds to HJ cruciform DNA, conferring on it an open structure. The RuvB hexamer acts as an ATP-dependent pump, pulling dsDNA into and through the RuvAB complex. RuvB forms 2 homohexamers on either side of HJ DNA bound by 1 or 2 RuvA tetramers; 4 subunits per hexamer contact DNA at a time. Coordinated motions by a converter formed by DNA-disengaged RuvB subunits stimulates ATP hydrolysis and nucleotide exchange. Immobilization of the converter enables RuvB to convert the ATP-contained energy into a lever motion, pulling 2 nucleotides of DNA out of the RuvA tetramer per ATP hydrolyzed, thus driving DNA branch migration. The RuvB motors rotate together with the DNA substrate, which together with the progressing nucleotide cycle form the mechanistic basis for DNA recombination by continuous HJ branch migration. Branch migration allows RuvC to scan DNA until it finds its consensus sequence, where it cleaves and resolves cruciform DNA. This is Holliday junction branch migration complex subunit RuvB from Roseobacter denitrificans (strain ATCC 33942 / OCh 114) (Erythrobacter sp. (strain OCh 114)).